Reading from the N-terminus, the 1424-residue chain is Serine/threonine-protein kinase LMTK3 (1424 aa).

A signal peptide spans 1–20 (MPAPGALILLAAVSASGCLA). A helical membrane pass occupies residues 40 to 60 (AVVLISCSGLLAFIFLLLTCL). The segment at 74–95 (NPEGEDCSGEYTPPAEETSSSQ) is disordered. The region spanning 133–411 (LSYLQEIGSG…SDLQLQLTYL (279 aa)) is the Protein kinase domain. Residues 139-147 (IGSGWFGKV) and Lys164 each bind ATP. The residue at position 232 (Ser232) is a Phosphoserine. Asp266 acts as the Proton acceptor in catalysis. 2 disordered regions span residues 413 to 465 (SERP…PDDV) and 486 to 516 (RGAG…PFYE). Over residues 418–439 (RPPPPPPPPRDGPFPWPWPPSH) the composition is skewed to pro residues. Arg490 carries the omega-N-methylarginine modification. The span at 496 to 507 (PWQPASAPPAPH) shows a compositional bias: pro residues. A phosphoserine mark is found at Ser531 and Ser535. 5 disordered regions span residues 544–666 (EHGS…PLPC), 680–964 (LERG…MSPE), 976–1024 (MSPK…APET), 1041–1313 (GLEM…RKRK), and 1325–1424 (LFDQ…PVEN). The span at 571–584 (QTPSEVPQLVSETW) shows a compositional bias: polar residues. The span at 638 to 647 (AEEEEEESSP) shows a compositional bias: acidic residues. Residues 700–713 (PPEDDSSLRAERGS) show a composition bias toward basic and acidic residues. Over residues 744–758 (RGPPPAPPPPPPPPR) the composition is skewed to pro residues. Residues 759 to 791 (ASAEPAASPDPPSALASPGSGLSSPGPKPGDSG) show a composition bias toward low complexity. The segment covering 818–841 (PRAPPEPPDPGAPRPPPDPGPLPL) has biased composition (pro residues). The span at 935–954 (DMKEKVAENGLESPEKEERA) shows a compositional bias: basic and acidic residues. Ser947, Ser962, and Ser977 each carry phosphoserine. Residues 994-1004 (RNTERPPEIGP) show a composition bias toward basic and acidic residues. Gly residues predominate over residues 1084–1094 (GSGGRALGGVG). The span at 1095–1105 (TAPAGGPASAV) shows a compositional bias: low complexity. Residues 1167–1177 (DPLKPERKGPE) are compositionally biased toward basic and acidic residues. Residues 1200-1213 (SRLSLALPPLTLTP) are compositionally biased toward low complexity. Residues 1231 to 1241 (AAGGEAGGAGA) show a composition bias toward gly residues. Positions 1245–1261 (AEEDGEDEDEDEEDEEA) are enriched in acidic residues. Residues 1262-1272 (AGSRDPGRTRE) show a composition bias toward basic and acidic residues. Positions 1329-1339 (ETPTNELSVQG) are enriched in polar residues. The span at 1348 to 1360 (STPPAPPTPPHPT) shows a compositional bias: pro residues.

This sequence belongs to the protein kinase superfamily. Tyr protein kinase family. Interacts with ESR1. Interacts with AP-2 complex subunit alpha. Mg(2+) is required as a cofactor. Post-translationally, autophosphorylated. Expressed in brain. Predominantly expressed in cerebral cortex, thalamus, the cerebellum and hippocampal formation (at protein level).

It is found in the membrane. Its subcellular location is the cell projection. The protein localises to the axon. It localises to the dendrite. The protein resides in the golgi apparatus membrane. The catalysed reaction is L-seryl-[protein] + ATP = O-phospho-L-seryl-[protein] + ADP + H(+). The enzyme catalyses L-threonyl-[protein] + ATP = O-phospho-L-threonyl-[protein] + ADP + H(+). In terms of biological role, protein kinase which phosphorylates ESR1 (in vitro) and protects it against proteasomal degradation. May also regulate ESR1 levels indirectly via a PKC-AKT-FOXO3 pathway where it decreases the activity of PKC and the phosphorylation of AKT, thereby increasing binding of transcriptional activator FOXO3 to the ESR1 promoter and increasing ESR1 transcription. Involved in endocytic trafficking of N-methyl-D-aspartate receptors (NMDAR) in neurons. The protein is Serine/threonine-protein kinase LMTK3 (Lmtk3) of Mus musculus (Mouse).